The chain runs to 370 residues: Probable phosphoserine aminotransferase (370 aa).

Arginine 45 contacts L-glutamate. Pyridoxal 5'-phosphate-binding positions include glycine 79 to threonine 80, tryptophan 105, threonine 154, aspartate 175, and glutamine 198. At lysine 199 the chain carries N6-(pyridoxal phosphate)lysine. Asparagine 240–threonine 241 contacts pyridoxal 5'-phosphate.

It belongs to the class-V pyridoxal-phosphate-dependent aminotransferase family. SerC subfamily. In terms of assembly, homodimer. The cofactor is pyridoxal 5'-phosphate.

The catalysed reaction is O-phospho-L-serine + 2-oxoglutarate = 3-phosphooxypyruvate + L-glutamate. It catalyses the reaction 4-(phosphooxy)-L-threonine + 2-oxoglutarate = (R)-3-hydroxy-2-oxo-4-phosphooxybutanoate + L-glutamate. It participates in amino-acid biosynthesis; L-serine biosynthesis; L-serine from 3-phospho-D-glycerate: step 2/3. Its pathway is cofactor biosynthesis; pyridoxine 5'-phosphate biosynthesis; pyridoxine 5'-phosphate from D-erythrose 4-phosphate: step 3/5. Catalyzes the reversible conversion of 3-phosphohydroxypyruvate to phosphoserine and of 3-hydroxy-2-oxo-4-phosphonooxybutanoate to phosphohydroxythreonine. The protein is Probable phosphoserine aminotransferase of Caenorhabditis elegans.